A 910-amino-acid chain; its full sequence is Auxilin (910 aa).

3 repeat units span residues 33–36, 37–40, and 41–44. Positions 33–44 are 3 X 4 AA approximate tandem repeats; that stretch reads NLKDNLKDTLKD. The Phosphatase tensin-type domain occupies 52–219; that stretch reads SVTSYTKGDL…GYMCDLLADK (168 aa). S109 bears the Phosphoserine mark. C161 (phosphocysteine intermediate) is an active-site residue. The 139-residue stretch at 225–363 folds into the C2 tensin-type domain; the sequence is FKPLTIKSIT…FQVTLDVELQ (139 aa). Positions 406 to 414 match the SH3-binding motif; that stretch reads PIDIPPDNP. A disordered region spans residues 448–772; that stretch reads QESEQSDDEL…RGKAAANLEG (325 aa). Phosphoserine is present on residues S450, S453, S560, and S567. Low complexity predominate over residues 547 to 569; it reads PSGPTSTQSTPRRSATSTSASPT. Residues 596–626 are compositionally biased toward polar residues; the sequence is FLNTASASSDPFLQPTRSPSPTVHASSTPAV. A compositionally biased stretch (low complexity) spans 651–666; sequence SAATSPTGSSHGTPTH. Positions 715–725 are enriched in gly residues; that stretch reads MGGGWQQGGGY. Over residues 732–758 the composition is skewed to polar residues; that stretch reads SKPQSSMPHSSPQNRPNYNVSFSSMPG. Residues 846–910 form the J domain; it reads TKWKPVGMAD…FENQGQKPLY (65 aa).

Forms a complex composed of HSPA8, CLTC and DNAJC6. Interacts with HSPA8/HSC70 in an ATP-dependent manner; this interaction stimulates the HSPA8's ATPase activity. Interacts with CLTC; this interaction produces a local change in heavy-chain contacts, creating a detectable global distortion of the clathrin coat. Interacts with AP2A2. Interacts with DNM1(GTP-bound form); this interaction allows clathrin-coated vesicle (CCV) formation at the plasma membrane. In terms of processing, the N-terminus is blocked. Phosphorylation at Ser-567 modulates its ability to bind CLTC and therefore the synaptic vesicle endocytosis (SVE). As to expression, brain.

The protein resides in the cytoplasmic vesicle. It is found in the clathrin-coated vesicle. Its function is as follows. May act as a protein phosphatase and/or a lipid phosphatase. Co-chaperone that recruits HSPA8/HSC70 to clathrin-coated vesicles (CCVs) and promotes the ATP-dependent dissociation of clathrin from CCVs and participates in clathrin-mediated endocytosis of synaptic vesicles and their recycling and also in intracellular trafficking. Firstly, binds tightly to the clathrin cages, at a ratio of one DNAJC6 per clathrin triskelion. The HSPA8:ATP complex then binds to the clathrin-auxilin cage, initially at a ratio of one HSPA8 per triskelion leading to ATP hydrolysis stimulation and causing a conformational change in the HSPA8. This cycle is repeated three times to drive to a complex containing the clathrin-auxilin cage associated to three HSPA8:ADP complex. The ATP hydrolysis of the third HSPA8:ATP complex leads to a concerted dismantling of the cage into component triskelia. Then, dissociates from the released triskelia and be recycled to initiate another cycle of HSPA8's recruitment. Also acts during the early steps of clathrin-coated vesicle (CCV) formation through its interaction with the GTP bound form of DNM1. This Bos taurus (Bovine) protein is Auxilin.